We begin with the raw amino-acid sequence, 165 residues long: Large ribosomal subunit protein uL10 (165 aa).

It belongs to the universal ribosomal protein uL10 family. As to quaternary structure, part of the ribosomal stalk of the 50S ribosomal subunit. The N-terminus interacts with L11 and the large rRNA to form the base of the stalk. The C-terminus forms an elongated spine to which L12 dimers bind in a sequential fashion forming a multimeric L10(L12)X complex.

Its function is as follows. Forms part of the ribosomal stalk, playing a central role in the interaction of the ribosome with GTP-bound translation factors. The polypeptide is Large ribosomal subunit protein uL10 (Paraburkholderia phymatum (strain DSM 17167 / CIP 108236 / LMG 21445 / STM815) (Burkholderia phymatum)).